Consider the following 326-residue polypeptide: Beta-ketoacyl-[acyl-carrier-protein] synthase III (326 aa).

Residues cysteine 120 and histidine 253 contribute to the active site. Residues 254–258 form an ACP-binding region; sequence QANIR. Asparagine 283 is a catalytic residue.

It belongs to the thiolase-like superfamily. FabH family. In terms of assembly, homodimer.

Its subcellular location is the cytoplasm. It carries out the reaction malonyl-[ACP] + acetyl-CoA + H(+) = 3-oxobutanoyl-[ACP] + CO2 + CoA. It participates in lipid metabolism; fatty acid biosynthesis. Functionally, catalyzes the condensation reaction of fatty acid synthesis by the addition to an acyl acceptor of two carbons from malonyl-ACP. Catalyzes the first condensation reaction which initiates fatty acid synthesis and may therefore play a role in governing the total rate of fatty acid production. Possesses both acetoacetyl-ACP synthase and acetyl transacylase activities. Its substrate specificity determines the biosynthesis of branched-chain and/or straight-chain of fatty acids. The protein is Beta-ketoacyl-[acyl-carrier-protein] synthase III of Ralstonia pickettii (strain 12J).